Consider the following 278-residue polypeptide: 2-(acetamidomethylene)succinate hydrolase (278 aa).

Residues isoleucine 41 and 106-107 (SL) contribute to the chloride site. Serine 106 functions as the Nucleophile in the catalytic mechanism. Active-site residues include aspartate 130 and histidine 258.

This sequence belongs to the AB hydrolase superfamily. Homodimer.

It catalyses the reaction 2-(acetamidomethylene)succinate + 2 H2O + H(+) = succinate semialdehyde + acetate + NH4(+) + CO2. It participates in cofactor degradation; B6 vitamer degradation. Its function is as follows. Catalyzes the final reaction in the degradation of vitamin B6 from (E)-2-(acetamidomethylene)succinate (E-2AMS) to produce succinic semialdehyde, acetate, ammonia and carbon dioxide. This Mesorhizobium japonicum (strain LMG 29417 / CECT 9101 / MAFF 303099) (Mesorhizobium loti (strain MAFF 303099)) protein is 2-(acetamidomethylene)succinate hydrolase.